Consider the following 187-residue polypeptide: Choriogonadotropin subunit beta variant 1 (187 aa).

An N-terminal signal peptide occupies residues 1–50 (MSTFPVLAEDIPLRERHVKGRVDPHFRAPKMEMFQRLLLLLLLSMGGTWA). 6 disulfide bridges follow: cysteine 59–cysteine 107, cysteine 73–cysteine 122, cysteine 76–cysteine 160, cysteine 84–cysteine 138, cysteine 88–cysteine 140, and cysteine 143–cysteine 150. Asparagine 63 and asparagine 80 each carry an N-linked (GlcNAc...) asparagine glycan. A disordered region spans residues 161 to 187 (DDPRFQDSSSSKAPPPSLPSPSRLPGP). Positions 173-187 (APPPSLPSPSRLPGP) are enriched in pro residues.

It belongs to the glycoprotein hormones subunit beta family. In terms of tissue distribution, expressed in placenta, testis and pituitary.

The protein resides in the secreted. This is Choriogonadotropin subunit beta variant 1 (CGB1) from Homo sapiens (Human).